A 240-amino-acid polypeptide reads, in one-letter code: MKMMDANEIISFIQNSEKKTPVKVYIKGDLKEVTFPETVQAFVNKKSGVLFGEWSEIKTILDENNKHIVDYVVENDRRNSAIPMLDLKGIKARIEPGAIIRDHVEIGDNAVIMMNATINIGAVIGEGTMIDMNAVLGGRATVGKNCHVGAGAVLAGVIEPPSAKPVIVEDDVVIGANVVVLEGVTVGKGAVVAAGAVVTEDVPPYTVVAGTPARVIKEIDEKTKAKTEIKQELRQLNPEK.

This sequence belongs to the transferase hexapeptide repeat family. DapH subfamily.

It catalyses the reaction (S)-2,3,4,5-tetrahydrodipicolinate + acetyl-CoA + H2O = L-2-acetamido-6-oxoheptanedioate + CoA. It functions in the pathway amino-acid biosynthesis; L-lysine biosynthesis via DAP pathway; LL-2,6-diaminopimelate from (S)-tetrahydrodipicolinate (acetylase route): step 1/3. Catalyzes the transfer of an acetyl group from acetyl-CoA to tetrahydrodipicolinate. This is 2,3,4,5-tetrahydropyridine-2,6-dicarboxylate N-acetyltransferase from Bacillus mycoides (strain KBAB4) (Bacillus weihenstephanensis).